Reading from the N-terminus, the 226-residue chain is Lysosomal-associated transmembrane protein 4B (226 aa).

The next 4 membrane-spanning stretches (helical) occupy residues 26-46 (ILLGVWYLILNAVVLLILLSA), 72-92 (MCIAIAISVLMILICAMATYG), 100-120 (WIIPFFCYQIFDFALNTLVAV), and 153-173 (CLVLIILLFISIILAFKGYLI). Positions 205 to 221 (PPYDDATVNSATKEPPP) are required for NEDD4 interaction.

The protein belongs to the LAPTM4/LAPTM5 transporter family. In terms of assembly, homooligomer; upon reaching the lysosomes. Interacts with MCOLN1. Interacts with NEDD4; may play a role in the lysosomal sorting of LAPTM4B; enhances HGS association with NEDD4; mediates inhibition of EGFR degradation. Interacts with PIP5K1C; promotes SNX5 association with LAPTM4B; kinase activity of PIP5K1C is required; interaction is regulated by phosphatidylinositol 4,5-bisphosphate generated by PIP5K1C. Interacts with HGS; promotes HGS ubiquitination. Interacts with SNX5. Interacts with SLC3A2 and SLC7A5; recruits SLC3A2 and SLC7A5 to lysosomes to promote leucine uptake into these organelles and is required for mTORC1 activation. Interacts with LRRC32; decreases TGFB1 production in regulatory T cells. Interacts with BECN1; competes with EGFR for LAPTM4B binding; regulates EGFR activity. Interacts with EGFR; positively correlates with EGFR activation. Undergoes proteolytic cleavage following delivery to the lysosomes. Post-translationally, ubiquitinated by NEDD4. In terms of tissue distribution, strongly expressed in fetal ovary, testis, adrenal gland, liver and uterus, and weakly expressed in the spleen.

It is found in the endomembrane system. It localises to the late endosome membrane. The protein localises to the cell membrane. Its subcellular location is the cell projection. The protein resides in the lysosome membrane. It is found in the endosome membrane. It localises to the endosome. The protein localises to the multivesicular body membrane. Its subcellular location is the multivesicular body lumen. In terms of biological role, required for optimal lysosomal function. Blocks EGF-stimulated EGFR intraluminal sorting and degradation. Conversely by binding with the phosphatidylinositol 4,5-bisphosphate, regulates its PIP5K1C interaction, inhibits HGS ubiquitination and relieves LAPTM4B inhibition of EGFR degradation. Recruits SLC3A2 and SLC7A5 (the Leu transporter) to the lysosome, promoting entry of leucine and other essential amino acid (EAA) into the lysosome, stimulating activation of proton-transporting vacuolar (V)-ATPase protein pump (V-ATPase) and hence mTORC1 activation. Plays a role as negative regulator of TGFB1 production in regulatory T cells. Binds ceramide and facilitates its exit from late endosome in order to control cell death pathways. This chain is Lysosomal-associated transmembrane protein 4B, found in Bos taurus (Bovine).